The primary structure comprises 107 residues: Immunoglobulin kappa constant (107 aa).

Residues 6–103 (PTVSIFPPSS…STSPIVKSFN (98 aa)) form the Ig-like domain. Residues cysteine 27 and cysteine 87 are joined by a disulfide bond.

The sequence is that of Immunoglobulin kappa constant from Mus musculus (Mouse).